The sequence spans 317 residues: USG-1 protein homolog (317 aa).

Belongs to the aspartate-semialdehyde dehydrogenase family.

In Haemophilus influenzae (strain ATCC 51907 / DSM 11121 / KW20 / Rd), this protein is USG-1 protein homolog (usg).